An 80-amino-acid chain; its full sequence is SPI-1 type 3 secretion system needle filament protein (80 aa).

This sequence belongs to the SctF family. The core secretion machinery of the T3SS is composed of approximately 20 different proteins, including cytoplasmic components, a base, an export apparatus and a needle. This subunit polymerizes and forms the helical needle filament. Interacts with the needle tip protein SipD/SctA. Interacts with the needle adapter protein PrgJ/SctI, the secretin InvG/SctC and the minor export apparatus protein SpaP/SctR. In vitro, the needle protomer refolds spontaneously to extend the needle from the distal end.

The protein localises to the secreted. It localises to the cell surface. Its activity is regulated as follows. Binding of bile salts, including deoxycholate, to the PrgI:SipD interface may inhibit the T3SS function. In terms of biological role, component of the type III secretion system (T3SS), also called injectisome, which is used to inject bacterial effector proteins into eukaryotic host cells. PrgI/SctF1 forms the external needle filament that protrudes from the bacterial surface. Is probably involved in the transduction of an activating signal, thought to be mediated by the distal tip of the needle filament, to the secretion machine. Required for invasion of epithelial cells. Required for the secretion of the effector protein SptP. Functionally, during infection, can induce innate immune responses. The needle proteins interact with host TLR2 or TLR4, and induce signaling by NF-kappa-B and/or AP-1. This activation is MyD88 dependent and results in increased expression of cytokines, including TNF-alpha, IL-6 and IL-8. This Salmonella typhimurium (strain LT2 / SGSC1412 / ATCC 700720) protein is SPI-1 type 3 secretion system needle filament protein.